Reading from the N-terminus, the 253-residue chain is Glucosamine-6-phosphate deaminase (253 aa).

The active-site Proton acceptor; for enolization step is the Asp65. The active-site For ring-opening step is the Asn133. Catalysis depends on His135, which acts as the Proton acceptor; for ring-opening step. The active-site For ring-opening step is the Glu140.

This sequence belongs to the glucosamine/galactosamine-6-phosphate isomerase family. NagB subfamily.

It catalyses the reaction alpha-D-glucosamine 6-phosphate + H2O = beta-D-fructose 6-phosphate + NH4(+). Its pathway is amino-sugar metabolism; N-acetylneuraminate degradation; D-fructose 6-phosphate from N-acetylneuraminate: step 5/5. Its function is as follows. Catalyzes the reversible isomerization-deamination of glucosamine 6-phosphate (GlcN6P) to form fructose 6-phosphate (Fru6P) and ammonium ion. In Corynebacterium efficiens (strain DSM 44549 / YS-314 / AJ 12310 / JCM 11189 / NBRC 100395), this protein is Glucosamine-6-phosphate deaminase.